The primary structure comprises 471 residues: Plasmepsin VII (471 aa).

Residues 1-24 form the signal peptide; it reads MKSVYHHFAIIFFLKLFLCNCILS. The Peptidase A1 domain maps to 96-438; the sequence is YYGKIAIGEN…DKDNLQIGFV (343 aa). Active-site residues include D115 and D325.

Belongs to the peptidase A1 family.

The protein resides in the cytoplasm. This chain is Plasmepsin VII, found in Plasmodium berghei (strain Anka).